We begin with the raw amino-acid sequence, 100 residues long: Sec-independent protein translocase protein TatA (100 aa).

A helical transmembrane segment spans residues 1 to 21 (MGALKPWHIAVLVVVLILLFG). The span at 44-55 (KSLHDDDRDLAE) shows a compositional bias: basic and acidic residues. Positions 44–100 (KSLHDDDRDLAEKANAQAGYQPLPPQVQQEPYPQQTPYQAPPQQQPVVDPVQRARDS) are disordered. The segment covering 69–81 (QVQQEPYPQQTPY) has biased composition (low complexity).

The protein belongs to the TatA/E family. As to quaternary structure, the Tat system comprises two distinct complexes: a TatABC complex, containing multiple copies of TatA, TatB and TatC subunits, and a separate TatA complex, containing only TatA subunits. Substrates initially bind to the TatABC complex, which probably triggers association of the separate TatA complex to form the active translocon.

The protein resides in the cell membrane. In terms of biological role, part of the twin-arginine translocation (Tat) system that transports large folded proteins containing a characteristic twin-arginine motif in their signal peptide across membranes. TatA could form the protein-conducting channel of the Tat system. The protein is Sec-independent protein translocase protein TatA of Salinispora arenicola (strain CNS-205).